Here is a 241-residue protein sequence, read N- to C-terminus: 2,3,4,5-tetrahydropyridine-2,6-dicarboxylate N-acetyltransferase (241 aa).

This sequence belongs to the transferase hexapeptide repeat family. DapH subfamily.

The enzyme catalyses (S)-2,3,4,5-tetrahydrodipicolinate + acetyl-CoA + H2O = L-2-acetamido-6-oxoheptanedioate + CoA. It functions in the pathway amino-acid biosynthesis; L-lysine biosynthesis via DAP pathway; LL-2,6-diaminopimelate from (S)-tetrahydrodipicolinate (acetylase route): step 1/3. Catalyzes the transfer of an acetyl group from acetyl-CoA to tetrahydrodipicolinate. This chain is 2,3,4,5-tetrahydropyridine-2,6-dicarboxylate N-acetyltransferase, found in Thermoanaerobacter pseudethanolicus (strain ATCC 33223 / 39E) (Clostridium thermohydrosulfuricum).